Here is a 484-residue protein sequence, read N- to C-terminus: Glutamyl-tRNA(Gln) amidotransferase subunit A (484 aa).

Residues K76 and S151 each act as charge relay system in the active site. Residue S175 is the Acyl-ester intermediate of the active site.

The protein belongs to the amidase family. GatA subfamily. As to quaternary structure, heterotrimer of A, B and C subunits.

The catalysed reaction is L-glutamyl-tRNA(Gln) + L-glutamine + ATP + H2O = L-glutaminyl-tRNA(Gln) + L-glutamate + ADP + phosphate + H(+). Its function is as follows. Allows the formation of correctly charged Gln-tRNA(Gln) through the transamidation of misacylated Glu-tRNA(Gln) in organisms which lack glutaminyl-tRNA synthetase. The reaction takes place in the presence of glutamine and ATP through an activated gamma-phospho-Glu-tRNA(Gln). This Halorhodospira halophila (strain DSM 244 / SL1) (Ectothiorhodospira halophila (strain DSM 244 / SL1)) protein is Glutamyl-tRNA(Gln) amidotransferase subunit A.